The following is a 717-amino-acid chain: Polyribonucleotide nucleotidyltransferase (717 aa).

Positions 487 and 493 each coordinate Mg(2+). The region spanning 554–613 (PRITVINVPKDKIRDVIGTGGKVIREIVEYSGCKIDIEDDGTIKIAATSDEQAQKAIDRI) is the KH domain. Residues 623-691 (GQIYTGKVVK…DRGKVKLSMR (69 aa)) form the S1 motif domain.

Belongs to the polyribonucleotide nucleotidyltransferase family. The cofactor is Mg(2+).

It is found in the cytoplasm. It catalyses the reaction RNA(n+1) + phosphate = RNA(n) + a ribonucleoside 5'-diphosphate. Involved in mRNA degradation. Catalyzes the phosphorolysis of single-stranded polyribonucleotides processively in the 3'- to 5'-direction. The protein is Polyribonucleotide nucleotidyltransferase of Acidiphilium cryptum (strain JF-5).